We begin with the raw amino-acid sequence, 190 residues long: Lipid A acyltransferase PagP (190 aa).

Residues 1 to 18 (MKRLISCLTIICALNASA) form the signal peptide. Active-site residues include His60, Asp103, and Ser104.

The protein belongs to the lipid A palmitoyltransferase family. In terms of assembly, homodimer.

Its subcellular location is the cell outer membrane. It carries out the reaction a lipid A + a 1,2-diacyl-sn-glycero-3-phosphocholine = a hepta-acyl lipid A + a 2-acyl-sn-glycero-3-phosphocholine. The enzyme catalyses a lipid IVA + a 1,2-diacyl-sn-glycero-3-phosphocholine = a lipid IVB + a 2-acyl-sn-glycero-3-phosphocholine. It catalyses the reaction a lipid IIA + a 1,2-diacyl-sn-glycero-3-phosphocholine = a lipid IIB + a 2-acyl-sn-glycero-3-phosphocholine. In terms of biological role, transfers a fatty acid residue from the sn-1 position of a phospholipid to the N-linked hydroxyfatty acid chain on the proximal unit of lipid A or its precursors. In Legionella pneumophila (strain Corby), this protein is Lipid A acyltransferase PagP.